Here is a 60-residue protein sequence, read N- to C-terminus: Phospholipase A2 (60 aa).

Ca(2+) is bound by residues tyrosine 27, glycine 29, and glycine 31. The cysteines at positions 28 and 44 are disulfide-linked. Histidine 47 is a catalytic residue. Aspartate 48 provides a ligand contact to Ca(2+).

Ca(2+) serves as cofactor. Expressed by the venom gland.

The protein resides in the secreted. The catalysed reaction is a 1,2-diacyl-sn-glycero-3-phosphocholine + H2O = a 1-acyl-sn-glycero-3-phosphocholine + a fatty acid + H(+). Its function is as follows. Snake venom phospholipase A2 (PLA2) that displays mild but significant inhibition of mouse platelet aggregation induced by ADP and collagen. In vivo, induces edema in the foot pads and gastrocnemius muscles of mice but shows no myonecrotic or myotoxic activity. PA2 catalyzes the calcium-dependent hydrolysis of the 2-acyl groups in 3-sn-phosphoglycerides. This Lachesis muta rhombeata (Bushmaster) protein is Phospholipase A2.